A 248-amino-acid polypeptide reads, in one-letter code: MSFVVIIPARFSSTRLPGKPLVDINGKPMIVHVLERARESGAERIIVATDHEDVARAVEAAGGEVCMTRADHQSGTERLAEVVEKCGFSDDTVIVNVQGDEPMIPAVIIRQVAENLAQRQVGMATLAVPIHSAEEAFNPNAVKVVLDAEGYALYFSRATIPWDRDRFAKSLETVGDTCLRHLGIYGYRAGFIRRYVSWQPSQLEHIEMLEQLRVLWYGEKIHVAVAKAVPGTGVDTADDLERVRAEMR.

This sequence belongs to the KdsB family.

Its subcellular location is the cytoplasm. The catalysed reaction is 3-deoxy-alpha-D-manno-oct-2-ulosonate + CTP = CMP-3-deoxy-beta-D-manno-octulosonate + diphosphate. Its pathway is nucleotide-sugar biosynthesis; CMP-3-deoxy-D-manno-octulosonate biosynthesis; CMP-3-deoxy-D-manno-octulosonate from 3-deoxy-D-manno-octulosonate and CTP: step 1/1. It functions in the pathway bacterial outer membrane biogenesis; lipopolysaccharide biosynthesis. Functionally, activates KDO (a required 8-carbon sugar) for incorporation into bacterial lipopolysaccharide in Gram-negative bacteria. In Salmonella enteritidis PT4 (strain P125109), this protein is 3-deoxy-manno-octulosonate cytidylyltransferase.